The sequence spans 1099 residues: Carbamoyl phosphate synthase large chain (1099 aa).

The carboxyphosphate synthetic domain stretch occupies residues 1 to 402 (MPKREDIKRI…ALGKALRSLE (402 aa)). ATP is bound by residues R129, R169, G175, G176, E208, V210, E215, G241, I242, H243, Q285, and E299. Residues 133–328 (KETMEKAGLE…IAKVAALLAV (196 aa)) form the ATP-grasp 1 domain. Positions 285, 299, and 301 each coordinate Mg(2+). Positions 285, 299, and 301 each coordinate Mn(2+). The oligomerization domain stretch occupies residues 403-541 (LDAAPKLDLE…STYNGVENEA (139 aa)). Residues 542 to 944 (VPSDREKIMI…AFAKAQIAAG (403 aa)) are carbamoyl phosphate synthetic domain. Positions 666–857 (AKLLKQIGLK…VARIAAKIMV (192 aa)) constitute an ATP-grasp 2 domain. Residues R702, K741, L743, E748, G773, V774, H775, S776, Q816, and E828 each coordinate ATP. Residues Q816, E828, and N830 each contribute to the Mg(2+) site. The Mn(2+) site is built by Q816, E828, and N830. The 155-residue stretch at 945–1099 (NPLPTTGAIL…VRRLTDTWKM (155 aa)) folds into the MGS-like domain. Positions 945 to 1099 (NPLPTTGAIL…VRRLTDTWKM (155 aa)) are allosteric domain.

The protein belongs to the CarB family. In terms of assembly, composed of two chains; the small (or glutamine) chain promotes the hydrolysis of glutamine to ammonia, which is used by the large (or ammonia) chain to synthesize carbamoyl phosphate. Tetramer of heterodimers (alpha,beta)4. It depends on Mg(2+) as a cofactor. Mn(2+) is required as a cofactor.

It catalyses the reaction hydrogencarbonate + L-glutamine + 2 ATP + H2O = carbamoyl phosphate + L-glutamate + 2 ADP + phosphate + 2 H(+). The catalysed reaction is hydrogencarbonate + NH4(+) + 2 ATP = carbamoyl phosphate + 2 ADP + phosphate + 2 H(+). Its pathway is amino-acid biosynthesis; L-arginine biosynthesis; carbamoyl phosphate from bicarbonate: step 1/1. It functions in the pathway pyrimidine metabolism; UMP biosynthesis via de novo pathway; (S)-dihydroorotate from bicarbonate: step 1/3. Its function is as follows. Large subunit of the glutamine-dependent carbamoyl phosphate synthetase (CPSase). CPSase catalyzes the formation of carbamoyl phosphate from the ammonia moiety of glutamine, carbonate, and phosphate donated by ATP, constituting the first step of 2 biosynthetic pathways, one leading to arginine and/or urea and the other to pyrimidine nucleotides. The large subunit (synthetase) binds the substrates ammonia (free or transferred from glutamine from the small subunit), hydrogencarbonate and ATP and carries out an ATP-coupled ligase reaction, activating hydrogencarbonate by forming carboxy phosphate which reacts with ammonia to form carbamoyl phosphate. In Thermotoga maritima (strain ATCC 43589 / DSM 3109 / JCM 10099 / NBRC 100826 / MSB8), this protein is Carbamoyl phosphate synthase large chain.